We begin with the raw amino-acid sequence, 226 residues long: Glutathione peroxidase 3 (226 aa).

Positions 1 to 24 are cleaved as a signal peptide; sequence MARLLQASCLLSLLLAGFLPQSRG. Residue U73 is part of the active site. U73 is a non-standard amino acid (selenocysteine).

It belongs to the glutathione peroxidase family. Homotetramer. As to expression, secreted in plasma.

The protein localises to the secreted. It catalyses the reaction 2 glutathione + H2O2 = glutathione disulfide + 2 H2O. It carries out the reaction tert-butyl hydroperoxide + 2 glutathione = tert-butanol + glutathione disulfide + H2O. In terms of biological role, protects cells and enzymes from oxidative damage, by catalyzing the reduction of hydrogen peroxide, lipid peroxides and organic hydroperoxide, by glutathione. The chain is Glutathione peroxidase 3 from Sapajus apella (Brown-capped capuchin).